The chain runs to 154 residues: UPF0547 protein C16orf87 homolog (154 aa).

The disordered stretch occupies residues asparagine 43–glutamate 119. Residues valine 68–arginine 84 show a composition bias toward basic and acidic residues. Serine 91 carries the post-translational modification Phosphoserine. Residues lysine 104 to lysine 132 are a coiled coil. Basic and acidic residues predominate over residues lysine 109 to glutamate 119.

The protein belongs to the UPF0547 family.

This Mus musculus (Mouse) protein is UPF0547 protein C16orf87 homolog.